Reading from the N-terminus, the 201-residue chain is NADH-quinone oxidoreductase subunit C (201 aa).

Belongs to the complex I 30 kDa subunit family. NDH-1 is composed of 14 different subunits. Subunits NuoB, C, D, E, F, and G constitute the peripheral sector of the complex.

The protein resides in the cell inner membrane. The enzyme catalyses a quinone + NADH + 5 H(+)(in) = a quinol + NAD(+) + 4 H(+)(out). In terms of biological role, NDH-1 shuttles electrons from NADH, via FMN and iron-sulfur (Fe-S) centers, to quinones in the respiratory chain. The immediate electron acceptor for the enzyme in this species is believed to be ubiquinone. Couples the redox reaction to proton translocation (for every two electrons transferred, four hydrogen ions are translocated across the cytoplasmic membrane), and thus conserves the redox energy in a proton gradient. The chain is NADH-quinone oxidoreductase subunit C from Azoarcus sp. (strain BH72).